Consider the following 933-residue polypeptide: Progesterone receptor (933 aa).

An AF3; mediates transcriptional activation region spans residues 1–164; that stretch reads MTELKAKGPR…PATQRVLSPL (164 aa). The segment at 1–256 is disordered; it reads MTELKAKGPR…AAAGGGAAAV (256 aa). Positions 1–566 are modulating, Pro-Rich; that stretch reads MTELKAKGPR…YSFESLPQKI (566 aa). S20 is modified (phosphoserine). 2 short sequence motifs (LXXL motif) span residues 55–59 and 115–119; these read LDGLL and LDTLL. Phosphoserine occurs at positions 130 and 162. Positions 165 to 305 are mediates transcriptional transrepression; the sequence is MSRSGGKAGD…LATTTMDFIH (141 aa). The short motif at 183 to 187 is the Nuclear localization signal element; it reads KVLPR. A phosphoserine mark is found at S190 and S213. The span at 220–231 shows a compositional bias: acidic residues; it reads EVEEEDGSESED. Phosphoserine; by MAPK1 is present on S294. Residues 332-380 are disordered; that stretch reads GAGAASAFAPPRSSPSASSTPVAVGDFPDCAYPPDADPKDDAYPLYGDF. Positions 335 to 350 are enriched in low complexity; the sequence is AASAFAPPRSSPSASS. S345 bears the Phosphoserine; by MAPK mark. A Glycyl lysine isopeptide (Lys-Gly) (interchain with G-Cter in SUMO); alternate cross-link involves residue K388. A Glycyl lysine isopeptide (Lys-Gly) (interchain with G-Cter in ubiquitin); alternate cross-link involves residue K388. A Phosphoserine; by CDK2 modification is found at S400. The tract at residues 415-454 is disordered; it reads PDFPLGPPPPLPPRAPPSRPGEAAVTAAPASASVSSSSSS. A compositionally biased stretch (pro residues) spans 418–433; the sequence is PLGPPPPLPPRAPPSR. The span at 434-454 shows a compositional bias: low complexity; it reads PGEAAVTAAPASASVSSSSSS. Residues 456–546 form an AF1; mediates transcriptional activation region; it reads STLECILYKA…VYPPYLNYLR (91 aa). Residue K531 forms a Glycyl lysine isopeptide (Lys-Gly) (interchain with G-Cter in SUMO) linkage. NR C4-type zinc fingers lie at residues 567–587 and 603–627; these read CLICGDEASGCHYGVLTCGSC and CAGRNDCIVDKIRRKNCPACRLRKC. Residues 567-639 constitute a DNA-binding region (nuclear receptor); it reads CLICGDEASG…AGMVLGGRKF (73 aa). S676 is subject to Phosphoserine. One can recognise an NR LBD domain in the interval 679–913; it reads QDIQFFPPLI…EFPEMMSEVI (235 aa). Residues 687-933 are AF2; mediates transcriptional activation; that stretch reads LINLLVSIEP…MVKPLLFHKK (247 aa). R766 lines the progesterone pocket.

Belongs to the nuclear hormone receptor family. As to quaternary structure, interacts with SMARD1 and UNC45A. Interacts with CUEDC2; the interaction promotes ubiquitination, decreases sumoylation, and represses transcriptional activity. Interacts with PIAS3; the interaction promotes sumoylation of PR in a hormone-dependent manner, inhibits DNA-binding, and alters nuclear export. Interacts with SP1; the interaction requires ligand-induced phosphorylation on Ser-345 by ERK1/2-MAPK. Interacts with PRMT2. Interacts with NCOA2 and NCOA1. Interacts with KLF9. Interacts with GTF2B. Phosphorylated on multiple serine sites. Several of these sites are hormone-dependent. Phosphorylation on Ser-294 is highly hormone-dependent and modulates ubiquitination and sumoylation on Lys-388. Phosphorylation on Ser-345 also requires induction by hormone. Basal phosphorylation on Ser-162, Ser-190 and Ser-400 is increased in response to progesterone and can be phosphorylated in vitro by the CDK2-A1 complex. Increased levels of phosphorylation on Ser-400 also in the presence of EGF, heregulin, IGF, PMA and FBS. Phosphorylation at this site by CDK2 is ligand-independent, and increases nuclear translocation and transcriptional activity. Phosphorylation at Ser-162 and Ser-294, but not at Ser-190, is impaired during the G(2)/M phase of the cell cycle. Phosphorylation on Ser-345 by ERK1/2 MAPK is required for interaction with SP1. In terms of processing, sumoylation is hormone-dependent and represses transcriptional activity. Sumoylation on all three sites is enhanced by PIAS3. Desumoylated by SENP1. Sumoylation on Lys-388, the main site of sumoylation, is repressed by ubiquitination on the same site, and modulated by phosphorylation at Ser-294. Post-translationally, ubiquitination is hormone-dependent and represses sumoylation on the same site. Promoted by MAPK-mediated phosphorylation on Ser-294. Ubiquitinated by UBR5, leading to its degradation: UBR5 specifically recognizes and binds ligand-bound PGR when it is not associated with coactivators (NCOAs). In presence of NCOAs, the UBR5-degron is not accessible, preventing its ubiquitination and degradation. Palmitoylated by ZDHHC7 and ZDHHC21. Palmitoylation is required for plasma membrane targeting and for rapid intracellular signaling via ERK and AKT kinases and cAMP generation.

It localises to the nucleus. The protein resides in the cytoplasm. The steroid hormones and their receptors are involved in the regulation of eukaryotic gene expression and affect cellular proliferation and differentiation in target tissues. Transcriptional activator of several progesteron-dependent promoters in a variety of cell types. Involved in activation of SRC-dependent MAPK signaling on hormone stimulation. This is Progesterone receptor (PGR) from Chlorocebus aethiops (Green monkey).